The chain runs to 1537 residues: DNA-directed RNA polymerase subunit beta' (1537 aa).

The Zn(2+) site is built by cysteine 57, cysteine 59, cysteine 72, and cysteine 75. Mg(2+)-binding residues include aspartate 746, aspartate 748, and aspartate 750. Residues cysteine 1120, cysteine 1201, cysteine 1208, and cysteine 1211 each coordinate Zn(2+). A disordered region spans residues 1502–1537; sequence LEKYGQTSVSTDAVTGSQRYDDTRPSSTSINPSYGD. Composition is skewed to polar residues over residues 1506 to 1519 and 1526 to 1537; these read GQTS…TGSQ and PSSTSINPSYGD.

Belongs to the RNA polymerase beta' chain family. In terms of assembly, the RNAP catalytic core consists of 2 alpha, 1 beta, 1 beta' and 1 omega subunit. When a sigma factor is associated with the core the holoenzyme is formed, which can initiate transcription. Requires Mg(2+) as cofactor. Zn(2+) is required as a cofactor.

It carries out the reaction RNA(n) + a ribonucleoside 5'-triphosphate = RNA(n+1) + diphosphate. In terms of biological role, DNA-dependent RNA polymerase catalyzes the transcription of DNA into RNA using the four ribonucleoside triphosphates as substrates. The chain is DNA-directed RNA polymerase subunit beta' from Deinococcus geothermalis (strain DSM 11300 / CIP 105573 / AG-3a).